The following is a 188-amino-acid chain: Putative 3-methyladenine DNA glycosylase (188 aa).

The protein belongs to the DNA glycosylase MPG family.

In Ehrlichia ruminantium (Cowdria ruminantium), this protein is Putative 3-methyladenine DNA glycosylase.